A 758-amino-acid polypeptide reads, in one-letter code: Zinc finger protein VAR3, chloroplastic (758 aa).

The segment at 122–502 is 3 X approximate repeat; sequence FPGFPDELLR…PKEETQIGLI (381 aa). RanBP2-type zinc fingers lie at residues 276-305 and 308-338; these read KRGD…ARPK and LTGS…KRPR. Copy 1 of the repeat occupies 368 to 415; that stretch reads RWLSKVAQGGSDANSVDTDEDFPEIMPLRKGVNRYVVSTRKPPLERRL. 5 disordered regions span residues 410–470, 512–545, 572–606, 629–654, and 727–758; these read PLER…RFES, GGNQ…SEEP, EKMP…DSDF, TLPA…INKS, and KRKT…KGDK. Basic and acidic residues-rich tracts occupy residues 457–469, 519–545, and 572–581; these read RSDD…RRFE, QEDK…SEEP, and EKMPMRKGEN. Residues 547 to 596 form repeat 2; the sequence is RWFKRVTELHNVSDLESAIPQEISPEKMPMRKGENRFVVSRKKDRSLTSP. The stretch at 688–736 is repeat 3; the sequence is RWFKRVAEIKNISELSEIPDEDFPSIMPMRKGVNRFVVSKRKTPLERRL.

In terms of assembly, interacts in vitro with the chloroplast-located protein CCD4/NCED4. Homodimer. Interacts with ORRM1. Interacts with PCMP-H51/CRR28 and PCMP-H12/OTP82. Interacts with ORRM6. As to expression, weakly expressed in leaves and roots.

Its subcellular location is the plastid. The protein localises to the chloroplast. Its function is as follows. Probable component of some protein complex required for chloroplast and palisade cell development. Involved in C-to-U editing of chloroplastic RNA. Controls a large number of chloroplastic editing sites. Binds the editing recognition trans-factors PCMP-H51/CRR28 and PCMP-H12/OTP82. This is Zinc finger protein VAR3, chloroplastic from Arabidopsis thaliana (Mouse-ear cress).